The chain runs to 339 residues: Anthranilate phosphoribosyltransferase (339 aa).

5-phospho-alpha-D-ribose 1-diphosphate contacts are provided by residues glycine 81, 84–85, threonine 89, 91–94, 109–117, and serine 121; these read GD, NIST, and KHGNRSVSS. Glycine 81 contacts anthranilate. Mg(2+) is bound at residue serine 93. Asparagine 112 is a binding site for anthranilate. Anthranilate is bound at residue arginine 165. Aspartate 224 and glutamate 225 together coordinate Mg(2+).

Belongs to the anthranilate phosphoribosyltransferase family. Homodimer. Requires Mg(2+) as cofactor.

It catalyses the reaction N-(5-phospho-beta-D-ribosyl)anthranilate + diphosphate = 5-phospho-alpha-D-ribose 1-diphosphate + anthranilate. It functions in the pathway amino-acid biosynthesis; L-tryptophan biosynthesis; L-tryptophan from chorismate: step 2/5. Functionally, catalyzes the transfer of the phosphoribosyl group of 5-phosphorylribose-1-pyrophosphate (PRPP) to anthranilate to yield N-(5'-phosphoribosyl)-anthranilate (PRA). The polypeptide is Anthranilate phosphoribosyltransferase (Thermosynechococcus vestitus (strain NIES-2133 / IAM M-273 / BP-1)).